A 225-amino-acid polypeptide reads, in one-letter code: Ribose-5-phosphate isomerase A (225 aa).

Residues 33–36, 86–89, and 99–102 contribute to the substrate site; these read TGST, DGAD, and KGGG. The active-site Proton acceptor is E108. K126 is a binding site for substrate.

It belongs to the ribose 5-phosphate isomerase family. As to quaternary structure, homodimer.

The enzyme catalyses aldehydo-D-ribose 5-phosphate = D-ribulose 5-phosphate. The protein operates within carbohydrate degradation; pentose phosphate pathway; D-ribose 5-phosphate from D-ribulose 5-phosphate (non-oxidative stage): step 1/1. In terms of biological role, catalyzes the reversible conversion of ribose-5-phosphate to ribulose 5-phosphate. This is Ribose-5-phosphate isomerase A from Bordetella petrii (strain ATCC BAA-461 / DSM 12804 / CCUG 43448).